The primary structure comprises 101 residues: Ascorbate-specific PTS system EIIB component (101 aa).

Residues 3–96 (VRILAVCGNG…KLLEVIKAHF (94 aa)) form the PTS EIIB type-2 domain. Catalysis depends on Cys9, which acts as the Phosphocysteine intermediate. Cys9 is subject to Phosphocysteine.

Its subcellular location is the cytoplasm. It catalyses the reaction N(pros)-phospho-L-histidyl-[protein] + L-ascorbate(out) = L-ascorbate 6-phosphate(in) + L-histidyl-[protein]. In terms of biological role, the phosphoenolpyruvate-dependent sugar phosphotransferase system (sugar PTS), a major carbohydrate active transport system, catalyzes the phosphorylation of incoming sugar substrates concomitantly with their translocation across the cell membrane. The enzyme II UlaABC PTS system is involved in ascorbate transport. The sequence is that of Ascorbate-specific PTS system EIIB component (ulaB) from Escherichia coli O6:H1 (strain CFT073 / ATCC 700928 / UPEC).